A 1657-amino-acid chain; its full sequence is MSAADEVDGLGVARPHYGSVLDNERLTAEEMDERRRQNVAYEYLCHLEEAKRWMEACLGEDLPPTTELEEGLRNGVYLAKLGNFFSPKVVSLKKIYDREQTRYKATGLHFRHTDNVIQWLNAMDEIGLPKIFYPETTDIYDRKNMPRCIYCIHALSLYLFKLGLAPQIQDLYGKVDFTEEEINNMKTELEKYGIQMPAFSKIGGILANELSVDEAALHAAVIAINEAIDRRIPADTFAALKNPNAMLVNLEEPLASTYQDILYQAKQDKMTNAKNRTENSERERDVYEELLTQAEIQGNINKVNTFSALANIDLALEQGDALALFRALQSPALGLRGLQQQNSDWYLKQLLSDKQQKRQSGQTDPLQKEELQSGVDAANSAAQQYQRRLAAVALINAAIQKGVAEKTVLELMNPEAQLPQVYPFAADLYQKELATLQRQSPEHNLTHPELSVAVEMLSSVALINRALESGDVNTVWKQLSSSVTGLTNIEEENCQRYLDELMKLKAQAHAENNEFITWNDIQACVDHVNLVVQEEHERILAIGLINEALDEGDAQKTLQALQIPAAKLEGVLAEVAQHYQDTLIRAKREKAQEIQDESAVLWLDEIQGGIWQSNKDTQEAQKFALGIFAINEAVESGDVGKTLSALRSPDVGLYGVIPECGETYHSDLAEAKKKKLAVGDNNSKWVKHWVKGGYYYYHNLETQEGGWDEPPNFVQNSMQLSREEIQSSISGVTAAYNREQLWLANEGLITRLQARCRGYLVRQEFRSRMNFLKKQIPAITCIQSQWRGYKQKKAYQDRLAYLRSHKDEVVKIQSLARMHQARKRYRDRLQYFRDHINDIIKIQAFIRANKARDDYKTLINAEDPPMVVVRKFVHLLDQSDQDFQEELDLMKMREEVITLIRSNQQLENDLNLMDIKIGLLVKNKITLQDVVSHSKKLTKKNKEQLSDMMMINKQKGGLKALSKEKREKLEAYQHLFYLLQTNPTYLAKLIFQMPQNKSTKFMDSVIFTLYNYASNQREEYLLLRLFKTALQEEIKSKVDQIQEIVTGNPTVIKMVVSFNRGARGQNALRQILAPVVKEIMDDKSLNIKTDPVDIYKSWVNQMESQTGEASKLPYDVTPEQALAHEEVKTRLDSSIRNMRAVTDKFLSAIVSSVDKIPYGMRFIAKVLKDSLHEKFPDAGEDELLKIIGNLLYYRYMNPAIVAPDAFDIIDLSAGGQLTTDQRRNLGSIAKMLQHAASNKMFLGDNAHLSIINEYLSQSYQKFRRFFQTACDVPELQDKFNVDEYSDLVTLTKPVIYISIGEIINTHTLLLDHQDAIAPEHNDPIHELLDDLGEVPTIESLIGESSGNLNDPNKEALAKTEVSLTLTNKFDVPGDENAEMDARTILLNTKRLIVDVIRFQPGETLTEILETPATSEQEAEHQRAMQRRAIRDAKTPDKMKKSKSVKEDSNLTLQEKKEKIQTGLKKLTELGTVDPKNKYQELINDIARDIRNQRRYRQRRKAELVKLQQTYAALNSKATFYGEQVDYYKSYIKTCLDNLASKGKVSKKPREMKGKKSKKISLKYTAARLHEKGVLLEIEDLQVNQFKNVIFEISPTEEVGDFEVKAKFMGVQMETFMLHYQDLLQLQYEGVAVMKLFDRAKVNVNLLIFLLNKKFYGK.

N-acetylserine is present on Ser2. Ser2 bears the Phosphoserine mark. One can recognise a Calponin-homology (CH) domain in the interval 44-159; it reads LCHLEEAKRW…YCIHALSLYL (116 aa). The residue at position 172 (Tyr172) is a Phosphotyrosine. Residue Ser330 is modified to Phosphoserine. In terms of domain architecture, WW spans 679 to 712; sequence GDNNSKWVKHWVKGGYYYYHNLETQEGGWDEPPN. 4 consecutive IQ domains span residues 745 to 774, 775 to 804, 805 to 834, and 835 to 864; these read NEGL…FLKK, QIPA…YLRS, HKDE…YFRD, and HIND…AEDP. Positions 956–1274 are C1; that stretch reads GGLKALSKEK…FFQTACDVPE (319 aa). The Ras-GAP domain maps to 1020–1269; sequence YLLLRLFKTA…QKFRRFFQTA (250 aa). Residues 1276 to 1657 form a C2 region; that stretch reads QDKFNVDEYS…FLLNKKFYGK (382 aa). Positions 1410-1448 are disordered; that stretch reads TPATSEQEAEHQRAMQRRAIRDAKTPDKMKKSKSVKEDS. Over residues 1417 to 1448 the composition is skewed to basic and acidic residues; sequence EAEHQRAMQRRAIRDAKTPDKMKKSKSVKEDS. At Ser1441 the chain carries Phosphoserine; by PKC. Ser1443 is modified (phosphoserine; by PKC/PRKCE).

In terms of assembly, interacts with CDC42; the interaction is demonstrated with IQGAP1 in GTP-bound and in nucleotide-free state. Interacts with RAC1. Does not interact with RHOA. Interacts with TSG101. Interacts with PAK6. Interacts with TMEM14B; this interaction increases IQGAP1 phosphorylation and induces its nuclear translocation. Interacts with SASH1. Interacts with PJVK. Interacts with SLC26A4; this interaction enhances the chloride-bicarbonate exchange activity of SLC26A4. Interacts with SVEP1. Interacts with ILK; the interaction is required for localization of IQGAP to the cell cortex. (Microbial infection) Interacts with ebolavirus vp40. As to quaternary structure, (Microbial infection) Interacts with human cytomegalovirus protein UL5. In terms of assembly, (Microbial infection) Interacts with C.jejuni invasion antigen D (CiaD). Post-translationally, phosphorylation of Ser-1443 by PKC/PRKCE prevents interaction between C1 and C2, allowing binding of nucleotide-free CDC42. Ser-1443 phosphorylation enhances the ability to promote neurite outgrowth. Expressed in the placenta, lung, and kidney. A lower level expression is seen in the heart, liver, skeletal muscle and pancreas.

Its subcellular location is the cell membrane. It is found in the nucleus. It localises to the cytoplasm. The protein localises to the cell cortex. The protein resides in the apical cell membrane. Its subcellular location is the basolateral cell membrane. Functionally, plays a crucial role in regulating the dynamics and assembly of the actin cytoskeleton. Recruited to the cell cortex by interaction with ILK which allows it to cooperate with its effector DIAPH1 to locally stabilize microtubules and allow stable insertion of caveolae into the plasma membrane. Binds to activated CDC42 but does not stimulate its GTPase activity. Associates with calmodulin. May promote neurite outgrowth. May play a possible role in cell cycle regulation by contributing to cell cycle progression after DNA replication arrest. The polypeptide is Ras GTPase-activating-like protein IQGAP1 (IQGAP1) (Homo sapiens (Human)).